The chain runs to 673 residues: G-protein-signaling modulator 1 (673 aa).

The tract at residues methionine 1–arginine 507 is mediates association with membranes. TPR repeat units lie at residues cysteine 28–aspartate 61, serine 66–isoleucine 99, alanine 106–glutamine 139, alanine 146–valine 178, glutamate 180–leucine 199, glycine 206–phenylalanine 239, arginine 246–isoleucine 279, alanine 286–leucine 319, and glycine 326–isoleucine 359. An interaction with STK11/LKB1 region spans residues aspartate 361 to isoleucine 485. Serine 410 bears the Phosphoserine mark. Arginine 418 carries the post-translational modification Omega-N-methylarginine. Basic and acidic residues predominate over residues proline 420 to serine 439. A disordered region spans residues proline 420–arginine 477. Phosphoserine occurs at positions 442, 467, 469, 490, and 491. Residues lysine 451–serine 467 are compositionally biased toward basic and acidic residues. A GoLoco 1 domain is found at glutamate 493 to leucine 515. Residues aspartate 510–proline 544 form a disordered region. Residues glutamate 516–threonine 530 are compositionally biased toward low complexity. Phosphoserine is present on residues serine 543 and serine 567. 3 consecutive GoLoco domains span residues threonine 546–valine 568, glycine 594–proline 616, and aspartate 628–leucine 650. Disordered regions lie at residues isoleucine 609 to aspartate 628 and glutamate 645 to serine 673. Serine 653 is subject to Phosphoserine.

Belongs to the GPSM family. As to quaternary structure, interacts with INSC/inscuteable and FRMPD1. Interacts with GNAI1, GNAI2 and GNAI3 preferentially in their GDP-bound state. May also interact with GNAO1. Interacts with STK11/LKB1 and MACF1. In terms of processing, phosphorylation regulates interaction with G(i/o) alpha. In terms of tissue distribution, isoform 4 is specifically expressed in brain by neurons and also detected in testis, liver, kidney, heart and pancreas (at protein level). Highly expressed in cerebellum and subventricular zone-olfactory bulb system. Isoform 2 and isoform 3 are specifically expressed in heart and are also detected in brain.

The protein localises to the endoplasmic reticulum membrane. It is found in the golgi apparatus membrane. Its subcellular location is the cell membrane. The protein resides in the cytoplasm. It localises to the cytosol. Its function is as follows. Guanine nucleotide dissociation inhibitor (GDI) which functions as a receptor-independent activator of heterotrimeric G-protein signaling. Keeps G(i/o) alpha subunit in its GDP-bound form thus uncoupling heterotrimeric G-proteins signaling from G protein-coupled receptors. Controls spindle orientation and asymmetric cell fate of cerebral cortical progenitors. May also be involved in macroautophagy in intestinal cells. May play a role in drug addiction. The chain is G-protein-signaling modulator 1 (Gpsm1) from Rattus norvegicus (Rat).